A 105-amino-acid polypeptide reads, in one-letter code: Large ribosomal subunit protein bL21 (105 aa).

The protein belongs to the bacterial ribosomal protein bL21 family. Part of the 50S ribosomal subunit. Contacts protein L20.

Functionally, this protein binds to 23S rRNA in the presence of protein L20. The protein is Large ribosomal subunit protein bL21 of Phocaeicola vulgatus (strain ATCC 8482 / DSM 1447 / JCM 5826 / CCUG 4940 / NBRC 14291 / NCTC 11154) (Bacteroides vulgatus).